A 360-amino-acid polypeptide reads, in one-letter code: Ferrochelatase (360 aa).

Fe cation contacts are provided by histidine 210 and glutamate 291.

It belongs to the ferrochelatase family.

Its subcellular location is the cytoplasm. The catalysed reaction is heme b + 2 H(+) = protoporphyrin IX + Fe(2+). Its pathway is porphyrin-containing compound metabolism; protoheme biosynthesis; protoheme from protoporphyrin-IX: step 1/1. Functionally, catalyzes the ferrous insertion into protoporphyrin IX. The protein is Ferrochelatase of Pseudoalteromonas atlantica (strain T6c / ATCC BAA-1087).